The sequence spans 249 residues: Tumor necrosis factor receptor superfamily member 13B (249 aa).

Over M1–C128 the chain is Extracellular. TNFR-Cys repeat units follow at residues F5 to C38 and N42 to C76. 6 disulfide bridges follow: C6–C19, C22–C34, C26–C38, C43–C58, C61–C72, and C65–C76. A disordered region spans residues L86–G116. Residues V98–S111 are compositionally biased toward basic and acidic residues. The chain crosses the membrane as a helical; Signal-anchor for type III membrane protein span at residues T129 to L149. At R150–T249 the chain is on the cytoplasmic side. The interval L156–P176 is disordered.

Binds TRAF2, TRAF5 and TRAF6. Binds the NH2-terminal domain of CAMLG with its C-terminus.

It is found in the membrane. Receptor for TNFSF13/APRIL and TNFSF13B/TALL1/BAFF/BLYS that binds both ligands with similar high affinity. Mediates calcineurin-dependent activation of NF-AT, as well as activation of NF-kappa-B and AP-1. Involved in the stimulation of B- and T-cell function and the regulation of humoral immunity. The protein is Tumor necrosis factor receptor superfamily member 13B (Tnfrsf13b) of Mus musculus (Mouse).